A 396-amino-acid polypeptide reads, in one-letter code: L-lactate dehydrogenase (396 aa).

In terms of domain architecture, FMN hydroxy acid dehydrogenase spans 1–380 (MIISAASDYR…TQDSLVQGLG (380 aa)). Position 24 (Y24) interacts with substrate. FMN-binding residues include S106 and Q127. Y129 is a substrate binding site. T155 serves as a coordination point for FMN. R164 is a substrate binding site. K251 contacts FMN. H275 functions as the Proton acceptor in the catalytic mechanism. R278 contacts substrate. Residue 306–330 (DSGIRNGLDVVRMIALGADTILLGR) participates in FMN binding.

This sequence belongs to the FMN-dependent alpha-hydroxy acid dehydrogenase family. FMN is required as a cofactor.

Its subcellular location is the cell inner membrane. It carries out the reaction (S)-lactate + A = pyruvate + AH2. In terms of biological role, catalyzes the conversion of L-lactate to pyruvate. Is coupled to the respiratory chain. This chain is L-lactate dehydrogenase, found in Escherichia coli O81 (strain ED1a).